The primary structure comprises 923 residues: Mitochondrial 10-formyltetrahydrofolate dehydrogenase (923 aa).

The transit peptide at 1–19 (MLWRGSQALRHFSTSRVYF) directs the protein to the mitochondrion; not cleaved. The interval 23 to 331 (LKLALIGQSL…PASQYFSAGE (309 aa)) is hydrolase domain. Phosphoserine is present on Ser31. The residue at position 60 (Lys60) is an N6-succinyllysine. 110 to 112 (QFI) provides a ligand contact to (6R)-10-formyltetrahydrofolate. His128 serves as the catalytic Proton donor. Asp164 lines the (6R)-10-formyltetrahydrofolate pocket. Residues 339–416 (AEELKVAETI…DFIQKVVRRL (78 aa)) enclose the Carrier domain. At Ser375 the chain carries O-(pantetheine 4'-phosphoryl)serine. The interval 438–923 (TVKIPYQCFI…LKIKTVTLEY (486 aa)) is aldehyde dehydrogenase domain. Residues 592–594 (IPW) and 618–621 (KPAQ) contribute to the NADP(+) site. Ser650 carries the phosphoserine modification. NADP(+)-binding positions include 651–656 (GGVAGQ) and 671–672 (GS). Lys681 carries the post-translational modification N6-succinyllysine. The active-site Proton acceptor is Glu694. NADP(+) is bound at residue 694-695 (EL). The Proton donor role is filled by Cys728. NADP(+) contacts are provided by residues Lys778 and 825-827 (ESF). N6-acetyllysine is present on Lys903.

In the N-terminal section; belongs to the GART family. It in the C-terminal section; belongs to the aldehyde dehydrogenase family. ALDH1L subfamily. Phosphopantetheinylation at Ser-375 by AASDHPPT is required for the formyltetrahydrofolate dehydrogenase activity.

The protein resides in the mitochondrion. The catalysed reaction is (6R)-10-formyltetrahydrofolate + NADP(+) + H2O = (6S)-5,6,7,8-tetrahydrofolate + CO2 + NADPH + H(+). Mitochondrial 10-formyltetrahydrofolate dehydrogenase that catalyzes the NADP(+)-dependent conversion of 10-formyltetrahydrofolate to tetrahydrofolate and carbon dioxide. This is Mitochondrial 10-formyltetrahydrofolate dehydrogenase from Mus musculus (Mouse).